The primary structure comprises 126 residues: Holo-[acyl-carrier-protein] synthase (126 aa).

Residues Asp9 and Glu58 each contribute to the Mg(2+) site.

This sequence belongs to the P-Pant transferase superfamily. AcpS family. Mg(2+) serves as cofactor.

It is found in the cytoplasm. It catalyses the reaction apo-[ACP] + CoA = holo-[ACP] + adenosine 3',5'-bisphosphate + H(+). Transfers the 4'-phosphopantetheine moiety from coenzyme A to a Ser of acyl-carrier-protein. The protein is Holo-[acyl-carrier-protein] synthase of Vibrio campbellii (strain ATCC BAA-1116).